A 486-amino-acid chain; its full sequence is UDP-N-acetylmuramoyl-L-alanyl-D-glutamate--2,6-diaminopimelate ligase (486 aa).

Ser34 serves as a coordination point for UDP-N-acetyl-alpha-D-muramoyl-L-alanyl-D-glutamate. Position 112-118 (112-118) interacts with ATP; it reads GTAGKTS. Residues 154–155, Ser181, Gln187, and Arg189 each bind UDP-N-acetyl-alpha-D-muramoyl-L-alanyl-D-glutamate; that span reads TT. At Lys221 the chain carries N6-carboxylysine. Meso-2,6-diaminopimelate contacts are provided by residues Arg385, 409-412, Gly457, and Glu461; that span reads DNPR. The Meso-diaminopimelate recognition motif motif lies at 409–412; sequence DNPR.

This sequence belongs to the MurCDEF family. MurE subfamily. Requires Mg(2+) as cofactor. Post-translationally, carboxylation is probably crucial for Mg(2+) binding and, consequently, for the gamma-phosphate positioning of ATP.

It localises to the cytoplasm. It carries out the reaction UDP-N-acetyl-alpha-D-muramoyl-L-alanyl-D-glutamate + meso-2,6-diaminopimelate + ATP = UDP-N-acetyl-alpha-D-muramoyl-L-alanyl-gamma-D-glutamyl-meso-2,6-diaminopimelate + ADP + phosphate + H(+). Its pathway is cell wall biogenesis; peptidoglycan biosynthesis. In terms of biological role, catalyzes the addition of meso-diaminopimelic acid to the nucleotide precursor UDP-N-acetylmuramoyl-L-alanyl-D-glutamate (UMAG) in the biosynthesis of bacterial cell-wall peptidoglycan. The chain is UDP-N-acetylmuramoyl-L-alanyl-D-glutamate--2,6-diaminopimelate ligase from Rhizobium meliloti (strain 1021) (Ensifer meliloti).